Consider the following 468-residue polypeptide: ATP synthase subunit beta (468 aa).

Residue 156–163 (GGAGVGKT) participates in ATP binding.

It belongs to the ATPase alpha/beta chains family. As to quaternary structure, F-type ATPases have 2 components, CF(1) - the catalytic core - and CF(0) - the membrane proton channel. CF(1) has five subunits: alpha(3), beta(3), gamma(1), delta(1), epsilon(1). CF(0) has three main subunits: a(1), b(2) and c(9-12). The alpha and beta chains form an alternating ring which encloses part of the gamma chain. CF(1) is attached to CF(0) by a central stalk formed by the gamma and epsilon chains, while a peripheral stalk is formed by the delta and b chains.

Its subcellular location is the cell inner membrane. The catalysed reaction is ATP + H2O + 4 H(+)(in) = ADP + phosphate + 5 H(+)(out). Produces ATP from ADP in the presence of a proton gradient across the membrane. The catalytic sites are hosted primarily by the beta subunits. The polypeptide is ATP synthase subunit beta (Sulfurimonas denitrificans (strain ATCC 33889 / DSM 1251) (Thiomicrospira denitrificans (strain ATCC 33889 / DSM 1251))).